The primary structure comprises 306 residues: MMEKRRPVVCILGPTGAGKTATSLGMARKFPVRVINFDSRQVYTDFPVITAQPSPEERAVCPHELYGFLPTTETINASGFVDLAKERIDAAEAGELPVLVGGTGMYLQSLISGLAPIPDIPDEIRERIRKRSEEEGGPALYAELEKVDPEYCKRTHPNNRQRNARALEVYEATGKPFSWWHNREVPPSPYNFLKIGIKVDLDELTPLLKLRIEKMLEAGAVEEARKAWENCPDENAPGWTGIGCIELMRYIKGEIDLDETIRLWAKNTRAYAKRQLTWFKREKDIHWFAPHEYDKAVTFVGQWLAD.

Residue 13-20 (GPTGAGKT) participates in ATP binding. 15–20 (TGAGKT) contacts substrate. 2 interaction with substrate tRNA regions span residues 38–41 (DSRQ) and 161–165 (QRNAR).

Belongs to the IPP transferase family. As to quaternary structure, monomer. The cofactor is Mg(2+).

It catalyses the reaction adenosine(37) in tRNA + dimethylallyl diphosphate = N(6)-dimethylallyladenosine(37) in tRNA + diphosphate. Functionally, catalyzes the transfer of a dimethylallyl group onto the adenine at position 37 in tRNAs that read codons beginning with uridine, leading to the formation of N6-(dimethylallyl)adenosine (i(6)A). The polypeptide is tRNA dimethylallyltransferase (Maridesulfovibrio salexigens (strain ATCC 14822 / DSM 2638 / NCIMB 8403 / VKM B-1763) (Desulfovibrio salexigens)).